A 194-amino-acid polypeptide reads, in one-letter code: Probable GTP-binding protein EngB (194 aa).

The 173-residue stretch at 22-194 (DLPEYALAGR…AWQFIKEGME (173 aa)) folds into the EngB-type G domain. GTP is bound by residues 30-37 (GRSNVGKS), 57-61 (GKTQT), 75-78 (DVPG), 142-145 (TKAD), and 174-176 (FSS). 2 residues coordinate Mg(2+): serine 37 and threonine 59.

The protein belongs to the TRAFAC class TrmE-Era-EngA-EngB-Septin-like GTPase superfamily. EngB GTPase family. Requires Mg(2+) as cofactor.

Necessary for normal cell division and for the maintenance of normal septation. The sequence is that of Probable GTP-binding protein EngB from Listeria monocytogenes serotype 4b (strain CLIP80459).